The chain runs to 37 residues: Large ribosomal subunit protein bL36 (37 aa).

Belongs to the bacterial ribosomal protein bL36 family.

This chain is Large ribosomal subunit protein bL36, found in Nitrosococcus oceani (strain ATCC 19707 / BCRC 17464 / JCM 30415 / NCIMB 11848 / C-107).